The following is a 301-amino-acid chain: Acetylglutamate kinase (301 aa).

Substrate contacts are provided by residues 72–73, Arg94, and Asn199; that span reads GG.

It belongs to the acetylglutamate kinase family. ArgB subfamily.

The protein localises to the cytoplasm. It catalyses the reaction N-acetyl-L-glutamate + ATP = N-acetyl-L-glutamyl 5-phosphate + ADP. Its pathway is amino-acid biosynthesis; L-arginine biosynthesis; N(2)-acetyl-L-ornithine from L-glutamate: step 2/4. In terms of biological role, catalyzes the ATP-dependent phosphorylation of N-acetyl-L-glutamate. The chain is Acetylglutamate kinase from Bartonella tribocorum (strain CIP 105476 / IBS 506).